The primary structure comprises 61 residues: Large ribosomal subunit protein uL30 (61 aa).

It belongs to the universal ribosomal protein uL30 family. In terms of assembly, part of the 50S ribosomal subunit.

The protein is Large ribosomal subunit protein uL30 of Corynebacterium aurimucosum (strain ATCC 700975 / DSM 44827 / CIP 107346 / CN-1) (Corynebacterium nigricans).